Reading from the N-terminus, the 82-residue chain is Progonadoliberin-3 (82 aa).

An N-terminal signal peptide occupies residues 1 to 23 (MDLSNRTVVQVVVLALVAQVTLS). Glutamine 24 is modified (pyrrolidone carboxylic acid). Residue glycine 33 is modified to Glycine amide.

This sequence belongs to the GnRH family.

The protein resides in the secreted. Its function is as follows. Stimulates the secretion of gonadotropins. In Salmo trutta (Brown trout), this protein is Progonadoliberin-3 (gnrh3).